A 175-amino-acid polypeptide reads, in one-letter code: Avenin-like a7 (175 aa).

An N-terminal signal peptide occupies residues 1-19 (MKTMFILALLAFTATSAVA).

This sequence belongs to the prolamin family. Post-translationally, contains 7 disulfide bonds.

Seed storage protein. Not integrated in the gluten polymer through disulfide bonds, unless incorporated by reduction and reoxidation during dough making. Increases dough strength and bread volume, but decreases dough stability when added into a base wheat flour. This is Avenin-like a7 from Triticum aestivum (Wheat).